The primary structure comprises 197 residues: Large ribosomal subunit protein bL17 (197 aa).

The interval 120-197 is disordered; sequence DVPPADTGQG…EEEESEEDNT (78 aa). The segment covering 127–136 has biased composition (gly residues); sequence GQGGSGGTRR. Acidic residues predominate over residues 159-197; sequence SSDEESESVEEDEATAEEASADAEQGEAEEEEESEEDNT.

It belongs to the bacterial ribosomal protein bL17 family. In terms of assembly, part of the 50S ribosomal subunit. Contacts protein L32.

In Salinibacter ruber (strain DSM 13855 / M31), this protein is Large ribosomal subunit protein bL17.